We begin with the raw amino-acid sequence, 170 residues long: NADH-quinone oxidoreductase subunit B (170 aa).

Positions 42, 43, 107, and 136 each coordinate [4Fe-4S] cluster.

It belongs to the complex I 20 kDa subunit family. NDH-1 is composed of 14 different subunits. Subunits NuoB, C, D, E, F, and G constitute the peripheral sector of the complex. [4Fe-4S] cluster serves as cofactor.

Its subcellular location is the cell inner membrane. The catalysed reaction is a quinone + NADH + 5 H(+)(in) = a quinol + NAD(+) + 4 H(+)(out). Functionally, NDH-1 shuttles electrons from NADH, via FMN and iron-sulfur (Fe-S) centers, to quinones in the respiratory chain. The immediate electron acceptor for the enzyme in this species is believed to be ubiquinone. Couples the redox reaction to proton translocation (for every two electrons transferred, four hydrogen ions are translocated across the cytoplasmic membrane), and thus conserves the redox energy in a proton gradient. The sequence is that of NADH-quinone oxidoreductase subunit B from Campylobacter curvus (strain 525.92).